The following is a 148-amino-acid chain: Large-conductance mechanosensitive channel (148 aa).

2 consecutive transmembrane segments (helical) span residues 9–29 (AFAVKGNVVDMAVGIIIGAAF) and 79–99 (IQTVIDFIIVAFAIFMGVKAI).

It belongs to the MscL family. Homopentamer.

The protein localises to the cell inner membrane. Channel that opens in response to stretch forces in the membrane lipid bilayer. May participate in the regulation of osmotic pressure changes within the cell. The polypeptide is Large-conductance mechanosensitive channel (Pseudomonas syringae pv. tomato (strain ATCC BAA-871 / DC3000)).